The chain runs to 64 residues: Prokaryotic ubiquitin-like protein Pup (64 aa).

The segment at 1–32 is disordered; sequence MNAKQTQIMGGGGRDEDNAEDSAQASGQVQIN. The segment at 20–58 is ARC ATPase binding; it reads EDSAQASGQVQINTEGVDSLLDEIDGLLENNAEEFVRSY. Over residues 21-32 the composition is skewed to polar residues; it reads DSAQASGQVQIN. Residue glutamate 64 forms an Isoglutamyl lysine isopeptide (Glu-Lys) (interchain with K-? in acceptor proteins) linkage.

The protein belongs to the prokaryotic ubiquitin-like protein family. Strongly interacts with the proteasome-associated ATPase ARC through a hydrophobic interface; the interacting region of Pup lies in its C-terminal half. There is one Pup binding site per ARC hexamer ring.

It participates in protein degradation; proteasomal Pup-dependent pathway. In terms of biological role, protein modifier that is covalently attached to lysine residues of substrate proteins, thereby targeting them for proteasomal degradation. The tagging system is termed pupylation. In Corynebacterium glutamicum (strain R), this protein is Prokaryotic ubiquitin-like protein Pup.